Consider the following 462-residue polypeptide: Bifunctional dihydrofolate reductase-thymidylate synthase (462 aa).

The DHFR domain occupies 6 to 165 (TFSMVLAMTL…INYDYQHLIN (160 aa)). Valine 10 lines the substrate pocket. NADP(+)-binding positions include alanine 12 and 18–24 (GIGYQNR). Aspartate 32 is a substrate binding site. NADP(+) is bound by residues 49-51 (RKT) and 68-71 (ISKN). Isoleucine 101 provides a ligand contact to substrate. 102-109 (GGKRIFEE) is an NADP(+) binding site. Threonine 122 lines the substrate pocket. The tract at residues 180–462 (ENQYLDMITK…HDKIEMKMAV (283 aa)) is thymidylate synthase. Position 200 (arginine 200) interacts with dUMP. Cysteine 345 is a catalytic residue. DUMP-binding positions include histidine 346, 364-368 (QRSCD), asparagine 376, and 406-408 (HIY).

The protein in the N-terminal section; belongs to the dihydrofolate reductase family. This sequence in the C-terminal section; belongs to the thymidylate synthase family.

It catalyses the reaction (6S)-5,6,7,8-tetrahydrofolate + NADP(+) = 7,8-dihydrofolate + NADPH + H(+). The enzyme catalyses dUMP + (6R)-5,10-methylene-5,6,7,8-tetrahydrofolate = 7,8-dihydrofolate + dTMP. It functions in the pathway cofactor biosynthesis; tetrahydrofolate biosynthesis; 5,6,7,8-tetrahydrofolate from 7,8-dihydrofolate: step 1/1. In terms of biological role, bifunctional enzyme. Involved in de novo dTMP biosynthesis. Key enzyme in folate metabolism. Catalyzes an essential reaction for de novo glycine and purine synthesis, DNA precursor synthesis, and for the conversion of dUMP to dTMP. The polypeptide is Bifunctional dihydrofolate reductase-thymidylate synthase (Paramecium tetraurelia).